The primary structure comprises 221 residues: Ribonuclease T (221 aa).

In terms of domain architecture, Exonuclease spans 20–194 (VVIDIETAGF…YDTLQTANLF (175 aa)). Residues aspartate 23, glutamate 25, histidine 181, and aspartate 186 each coordinate Mg(2+). The Proton donor/acceptor role is filled by histidine 181.

This sequence belongs to the RNase T family. Homodimer. It depends on Mg(2+) as a cofactor.

Trims short 3' overhangs of a variety of RNA species, leaving a one or two nucleotide 3' overhang. Responsible for the end-turnover of tRNA: specifically removes the terminal AMP residue from uncharged tRNA (tRNA-C-C-A). Also appears to be involved in tRNA biosynthesis. The sequence is that of Ribonuclease T from Buchnera aphidicola subsp. Acyrthosiphon pisum (strain APS) (Acyrthosiphon pisum symbiotic bacterium).